Consider the following 321-residue polypeptide: ATP-dependent 6-phosphofructokinase (321 aa).

Gly-10 is an ATP binding site. ADP is bound at residue 20-24 (RAVVR). ATP contacts are provided by residues 71-72 (RD) and 101-104 (GEGT). Glu-102 is a binding site for Mg(2+). 125–127 (TID) serves as a coordination point for substrate. Asp-127 acts as the Proton acceptor in catalysis. Residue Arg-154 participates in ADP binding. Residues Arg-162 and 169–171 (MGR) contribute to the substrate site. ADP-binding positions include 185–187 (GAE) and 213–215 (KLH). Substrate-binding positions include Glu-222, Arg-246, and 252 to 255 (HIQR).

It belongs to the phosphofructokinase type A (PFKA) family. ATP-dependent PFK group I subfamily. Prokaryotic clade 'B1' sub-subfamily. In terms of assembly, homotetramer. It depends on Mg(2+) as a cofactor.

It is found in the cytoplasm. The enzyme catalyses beta-D-fructose 6-phosphate + ATP = beta-D-fructose 1,6-bisphosphate + ADP + H(+). It functions in the pathway carbohydrate degradation; glycolysis; D-glyceraldehyde 3-phosphate and glycerone phosphate from D-glucose: step 3/4. With respect to regulation, allosterically activated by ADP and other diphosphonucleosides, and allosterically inhibited by phosphoenolpyruvate. Its function is as follows. Catalyzes the phosphorylation of D-fructose 6-phosphate to fructose 1,6-bisphosphate by ATP, the first committing step of glycolysis. This Aquifex aeolicus (strain VF5) protein is ATP-dependent 6-phosphofructokinase.